Reading from the N-terminus, the 147-residue chain is Hemoglobin subunit epsilon (147 aa).

The region spanning 3–147 is the Globin domain; it reads HFTAEEKSTI…VATALAHKYH (145 aa). Phosphoserine is present on residues Ser14 and Ser51. Positions 64 and 93 each coordinate heme b.

It belongs to the globin family. Heterotetramer of two alpha chains and two epsilon chains in early embryonic hemoglobin Gower-2; two zeta chains and two epsilon chains in early embryonic hemoglobin Gower-1. As to expression, red blood cells.

The epsilon chain is a beta-type chain of early mammalian embryonic hemoglobin. This chain is Hemoglobin subunit epsilon (HBE1), found in Microcebus murinus (Gray mouse lemur).